The sequence spans 491 residues: ATP synthase subunit beta, chloroplastic (491 aa).

ATP is bound at residue 172 to 179 (GGAGVGKT).

This sequence belongs to the ATPase alpha/beta chains family. In terms of assembly, F-type ATPases have 2 components, CF(1) - the catalytic core - and CF(0) - the membrane proton channel. CF(1) has five subunits: alpha(3), beta(3), gamma(1), delta(1), epsilon(1). CF(0) has four main subunits: a(1), b(1), b'(1) and c(9-12).

The protein resides in the plastid. It is found in the chloroplast thylakoid membrane. It catalyses the reaction ATP + H2O + 4 H(+)(in) = ADP + phosphate + 5 H(+)(out). Functionally, produces ATP from ADP in the presence of a proton gradient across the membrane. The catalytic sites are hosted primarily by the beta subunits. In Pisum sativum (Garden pea), this protein is ATP synthase subunit beta, chloroplastic.